The chain runs to 509 residues: Ribonuclease Y (509 aa).

Residues 3-23 traverse the membrane as a helical segment; it reads WILYVILPAVCIILGWTIRWL. Residues 199 to 284 enclose the KH domain; it reads TVSTVSLPSD…EIVQKVTREI (86 aa). The HD domain maps to 325–418; the sequence is VLQHSKEVAI…VQIADAISAA (94 aa).

Belongs to the RNase Y family.

The protein localises to the cell membrane. In terms of biological role, endoribonuclease that initiates mRNA decay. The chain is Ribonuclease Y from Treponema denticola (strain ATCC 35405 / DSM 14222 / CIP 103919 / JCM 8153 / KCTC 15104).